The following is a 518-amino-acid chain: Glutamate--cysteine ligase (518 aa).

This sequence belongs to the glutamate--cysteine ligase type 1 family. Type 1 subfamily.

It carries out the reaction L-cysteine + L-glutamate + ATP = gamma-L-glutamyl-L-cysteine + ADP + phosphate + H(+). It functions in the pathway sulfur metabolism; glutathione biosynthesis; glutathione from L-cysteine and L-glutamate: step 1/2. In Salmonella arizonae (strain ATCC BAA-731 / CDC346-86 / RSK2980), this protein is Glutamate--cysteine ligase.